We begin with the raw amino-acid sequence, 582 residues long: External alternative NAD(P)H-ubiquinone oxidoreductase B4, mitochondrial (582 aa).

The N-terminal 39 residues, 1 to 39 (MSFHSFYQRASSLFKAYPSTSKILLLSTFSGGGGVLVYS), are a transit peptide targeting the mitochondrion. FAD is bound at residue 65 to 95 (KVVVLGSGWSGYSFLSYLNNPNYDVQVVSPR). 227-263 (LHFVVVGGGPTGVEFSAELHDFLVQDVAKIYPKVQEF) contacts NAD(+). Residues 384-419 (RVMEDIAAIFNKADKGNTGTLKKKDFNSVVKDICQR) enclose the EF-hand domain. Residues D397, T401, T403, and D408 each contribute to the Ca(2+) site. A Microbody targeting signal motif is present at residues 573-582 (FVFGRDSSSI).

The protein belongs to the NADH dehydrogenase family. The cofactor is FAD. As to expression, expressed in seedlings, roots, cotyledons, stems, buds and flowers and, to a lower extent, in stems and leaves.

It localises to the mitochondrion inner membrane. It is found in the peroxisome. The catalysed reaction is a quinone + NADH + H(+) = a quinol + NAD(+). The enzyme catalyses a ubiquinone + NADH + H(+) = a ubiquinol + NAD(+). With respect to regulation, no effect of calcium ions on activity. Functionally, alternative NADH-ubiquinone oxidoreductase which catalyzes the oxidation of mitochondrial NADH does not translocate protons across the inner mitochondrial membrane. NAD(P)H dehydrogenase; more efficient on NADH. The polypeptide is External alternative NAD(P)H-ubiquinone oxidoreductase B4, mitochondrial (NDB4) (Arabidopsis thaliana (Mouse-ear cress)).